A 175-amino-acid polypeptide reads, in one-letter code: tRNA (cytidine(56)-2'-O)-methyltransferase (175 aa).

Leu82 provides a ligand contact to S-adenosyl-L-methionine.

Belongs to the aTrm56 family. In terms of assembly, homodimer.

It is found in the cytoplasm. It carries out the reaction cytidine(56) in tRNA + S-adenosyl-L-methionine = 2'-O-methylcytidine(56) in tRNA + S-adenosyl-L-homocysteine + H(+). Specifically catalyzes the AdoMet-dependent 2'-O-ribose methylation of cytidine at position 56 in tRNAs. The chain is tRNA (cytidine(56)-2'-O)-methyltransferase from Cenarchaeum symbiosum (strain A).